Here is a 131-residue protein sequence, read N- to C-terminus: Putative gamma-taxilin 2 (131 aa).

The protein belongs to the taxilin family. In terms of tissue distribution, ubiquitously expressed.

In Homo sapiens (Human), this protein is Putative gamma-taxilin 2 (TXLNGY).